We begin with the raw amino-acid sequence, 633 residues long: MHGLLLAAAGLLSLPLHVIAHPQPSTNLAGRGVDLDAYRMADRSSYMNSDDMKLKQPGIASLSGGNYVDTATEVVKRMMPGMTFRMVDDHYVGESGISHVYFRQTMHGMDIDNSDFNVNIGKDGKVLSFGHSFYTGPAPDKAPVEKRDFSDPMKAFHGACKALSLPINADKATVQTMNEHEVMFMGTSGAMSDPQGKLCYMAKEDGTLALTWRVETDMGDNWLLSYVDAKETEKVHNVVDYVSHATYQVYRRALSPDPTEGKRESIENPWNLKTSPFTWISDGKTNYTTTRGNNAIAQANFDGGEDYLNNHRPNNKNLKFEYPYAPNMSPKSYIDASVTQLFYSANMVHDLYYMLGFTEKAGNFQVNNHGQGGKGNDFVILNAQDGSGTNNANFATPPDGKPGRMRVYIWTKAKPARDSSFEAGTVIHEYTHGLSNRLTGGPANAGCLNGMESGGMGEGWGDFFATAIRLKPNDNRNANYVHGEWVNNSPKGNRMYPYSTSLQTNPLVYTSCNKYNEVHAIGTVWGSMLYEVLWNLIDKHGKNDGPTPVFENGVPKDGKYLAMKLVMDGMAIQPCKPTFVQARDAIIDADMNLTKGSNRCEIWKAFAKRGLGVGAKYDPKNRTGNKGLPKDCQ.

The first 21 residues, 1-21, serve as a signal peptide directing secretion; that stretch reads MHGLLLAAAGLLSLPLHVIAH. A propeptide spanning residues 22-245 is cleaved from the precursor; that stretch reads PQPSTNLAGR…HNVVDYVSHA (224 aa). Asn286 carries N-linked (GlcNAc...) asparagine glycosylation. His428 contributes to the Zn(2+) binding site. The active site involves Glu429. His432 serves as a coordination point for Zn(2+). N-linked (GlcNAc...) asparagine glycans are attached at residues Asn592 and Asn621.

The protein belongs to the peptidase M36 family. Zn(2+) is required as a cofactor.

The protein resides in the secreted. Secreted metalloproteinase probably acting as a virulence factor. This is Extracellular metalloproteinase 5 (MEP5) from Arthroderma benhamiae (Trichophyton mentagrophytes).